The following is a 508-amino-acid chain: MEELQRYLKMDRSRERDFLYPLIFQEYIYVLAHDFGLTKSIPYESMQILSYDNKYSSLIVKRLIIRMYQQKHFLILDNDSNQKKFLGHNKNLYSQMISEGFAVIVEIPFALRLVSSYQGKEIKKSINLRSIHSTFPFLEDKFVHLNHVLDILIPYPIHLELLVQNLRCWIQDASFLHLLRFFLYEYHNWNSLTTQKTKQNSLFLKENRRFFLFLYNFHVYESESIFLFLRKKSYHLRSTSSIAFLDRRRFYGKIEHFKVVFHNDFHTILWLFKDPFMHYFRYQGKSIMSSKGTLLLMKKWKYYLVNLWECHFDFWSQPNRIHINQLSNRFLDFLGYLSGVRPNPSVVRNQMLENAFIIDIAINKLDTIVPIIPLIGSLAKAKFCNLSGQPVSKPAWTDSPDSDIMDRFGRICRNVSHYYSGSSKKKTLYRIKYIFRLSCARTLARKHKSTVRSFLKRLGSEFLEEFLIEEEEVLSFILPKISSSSQRLSKERIWYFDIIRINDLMDLS.

It belongs to the intron maturase 2 family. MatK subfamily.

Its subcellular location is the plastid. It localises to the chloroplast. Functionally, usually encoded in the trnK tRNA gene intron. Probably assists in splicing its own and other chloroplast group II introns. This Ranunculus lingua (Greater spearwort) protein is Maturase K.